A 43-amino-acid chain; its full sequence is uncharacterized protein (43 aa).

The segment at Met-1–Asn-43 is disordered. Residues Glu-20 to Gln-35 are compositionally biased toward acidic residues.

This is an uncharacterized protein from Dictyostelium discoideum (Social amoeba).